The sequence spans 201 residues: Recombination protein RecR (201 aa).

The C4-type zinc finger occupies 60-75 (CSRCGNVDTVDPCIVC). Residues 83–178 (SVIIVVEDVS…KITRLAHGVP (96 aa)) form the Toprim domain.

It belongs to the RecR family.

May play a role in DNA repair. It seems to be involved in an RecBC-independent recombinational process of DNA repair. It may act with RecF and RecO. The protein is Recombination protein RecR of Rhizobium johnstonii (strain DSM 114642 / LMG 32736 / 3841) (Rhizobium leguminosarum bv. viciae).